The sequence spans 438 residues: NADH-quinone oxidoreductase subunit D (438 aa).

The protein belongs to the complex I 49 kDa subunit family. In terms of assembly, NDH-1 is composed of 14 different subunits. Subunits NuoB, C, D, E, F, and G constitute the peripheral sector of the complex.

It localises to the cell membrane. The catalysed reaction is a quinone + NADH + 5 H(+)(in) = a quinol + NAD(+) + 4 H(+)(out). In terms of biological role, NDH-1 shuttles electrons from NADH, via FMN and iron-sulfur (Fe-S) centers, to quinones in the respiratory chain. The immediate electron acceptor for the enzyme in this species is believed to be a menaquinone. Couples the redox reaction to proton translocation (for every two electrons transferred, four hydrogen ions are translocated across the cytoplasmic membrane), and thus conserves the redox energy in a proton gradient. In Rhodococcus jostii (strain RHA1), this protein is NADH-quinone oxidoreductase subunit D.